Consider the following 57-residue polypeptide: Putative secreted protein ML2569.1 (57 aa).

The first 32 residues, 1-32, serve as a signal peptide directing secretion; that stretch reads MSRIVAPAAASVVVGLLLGAATIFGMTLMVQQ. The tract at residues 34–57 is disordered; that stretch reads TKPPLPGGDPQSSVLNRVEYGNRT.

The chain is Putative secreted protein ML2569.1 from Mycobacterium leprae (strain TN).